We begin with the raw amino-acid sequence, 346 residues long: Holliday junction branch migration complex subunit RuvB (346 aa).

The tract at residues 1–182 is large ATPase domain (RuvB-L); sequence MSERLVTSNE…LGVLCSMEYY (182 aa). ATP-binding positions include L21, R22, G63, K66, T67, T68, 129–131, R172, Y182, and R219; that span reads EDY. T67 contributes to the Mg(2+) binding site. Residues 183-253 are small ATPAse domain (RuvB-S); it reads TDEQLKEIII…AAKKSLEILE (71 aa). Positions 256–346 are head domain (RuvB-H); sequence GEGFDRIDNK…DSKQCTLFEK (91 aa). 2 residues coordinate DNA: R311 and R316.

The protein belongs to the RuvB family. Homohexamer. Forms an RuvA(8)-RuvB(12)-Holliday junction (HJ) complex. HJ DNA is sandwiched between 2 RuvA tetramers; dsDNA enters through RuvA and exits via RuvB. An RuvB hexamer assembles on each DNA strand where it exits the tetramer. Each RuvB hexamer is contacted by two RuvA subunits (via domain III) on 2 adjacent RuvB subunits; this complex drives branch migration. In the full resolvosome a probable DNA-RuvA(4)-RuvB(12)-RuvC(2) complex forms which resolves the HJ.

The protein localises to the cytoplasm. It catalyses the reaction ATP + H2O = ADP + phosphate + H(+). The RuvA-RuvB-RuvC complex processes Holliday junction (HJ) DNA during genetic recombination and DNA repair, while the RuvA-RuvB complex plays an important role in the rescue of blocked DNA replication forks via replication fork reversal (RFR). RuvA specifically binds to HJ cruciform DNA, conferring on it an open structure. The RuvB hexamer acts as an ATP-dependent pump, pulling dsDNA into and through the RuvAB complex. RuvB forms 2 homohexamers on either side of HJ DNA bound by 1 or 2 RuvA tetramers; 4 subunits per hexamer contact DNA at a time. Coordinated motions by a converter formed by DNA-disengaged RuvB subunits stimulates ATP hydrolysis and nucleotide exchange. Immobilization of the converter enables RuvB to convert the ATP-contained energy into a lever motion, pulling 2 nucleotides of DNA out of the RuvA tetramer per ATP hydrolyzed, thus driving DNA branch migration. The RuvB motors rotate together with the DNA substrate, which together with the progressing nucleotide cycle form the mechanistic basis for DNA recombination by continuous HJ branch migration. Branch migration allows RuvC to scan DNA until it finds its consensus sequence, where it cleaves and resolves cruciform DNA. The chain is Holliday junction branch migration complex subunit RuvB from Clostridium perfringens (strain 13 / Type A).